Here is a 270-residue protein sequence, read N- to C-terminus: Imidazoleglycerol-phosphate dehydratase 1, chloroplastic (270 aa).

The transit peptide at 1 to 62 (MELSSASAIL…QSQLRQSISC (62 aa)) directs the protein to the chloroplast. Residue S63 is modified to N-acetylserine. Substrate-binding positions include E84, 110–118 (HMLDQLASH), 136–140 (HHTNE), R162, and R184. Mn(2+) contacts are provided by H110, H136, H137, and E140. Mn(2+)-binding residues include H208, H232, H233, and E236. Residues 232-240 (HHIIEATFK) and 262-264 (SSK) contribute to the substrate site. The disordered stretch occupies residues 250 to 270 (TETDPRRGGTIPSSKGVLSRS).

This sequence belongs to the imidazoleglycerol-phosphate dehydratase family. It depends on Mn(2+) as a cofactor.

Its subcellular location is the plastid. It localises to the chloroplast. It carries out the reaction D-erythro-1-(imidazol-4-yl)glycerol 3-phosphate = 3-(imidazol-4-yl)-2-oxopropyl phosphate + H2O. The protein operates within amino-acid biosynthesis; L-histidine biosynthesis; L-histidine from 5-phospho-alpha-D-ribose 1-diphosphate: step 6/9. The sequence is that of Imidazoleglycerol-phosphate dehydratase 1, chloroplastic from Arabidopsis thaliana (Mouse-ear cress).